Here is a 656-residue protein sequence, read N- to C-terminus: Threonine--tRNA ligase (656 aa).

The TGS domain occupies 1-64 (MAEAASLTFP…ERSGKIEIIT (64 aa)). The catalytic stretch occupies residues 246 to 548 (DHRRLGREMD…LIENYAGHFP (303 aa)). Zn(2+)-binding residues include C342, H393, and H525.

Belongs to the class-II aminoacyl-tRNA synthetase family. Homodimer. Zn(2+) serves as cofactor.

The protein localises to the cytoplasm. It catalyses the reaction tRNA(Thr) + L-threonine + ATP = L-threonyl-tRNA(Thr) + AMP + diphosphate + H(+). Catalyzes the attachment of threonine to tRNA(Thr) in a two-step reaction: L-threonine is first activated by ATP to form Thr-AMP and then transferred to the acceptor end of tRNA(Thr). Also edits incorrectly charged L-seryl-tRNA(Thr). This chain is Threonine--tRNA ligase, found in Chelativorans sp. (strain BNC1).